The primary structure comprises 405 residues: Imidazolonepropionase (405 aa).

2 residues coordinate Fe(3+): histidine 72 and histidine 74. Residues histidine 72 and histidine 74 each coordinate Zn(2+). Arginine 81, tyrosine 144, and histidine 177 together coordinate 4-imidazolone-5-propanoate. Tyrosine 144 is a binding site for N-formimidoyl-L-glutamate. Histidine 242 contributes to the Fe(3+) binding site. Position 242 (histidine 242) interacts with Zn(2+). A 4-imidazolone-5-propanoate-binding site is contributed by glutamine 245. Aspartate 317 contributes to the Fe(3+) binding site. Position 317 (aspartate 317) interacts with Zn(2+). Residues asparagine 319 and glycine 321 each contribute to the N-formimidoyl-L-glutamate site. Residue threonine 322 participates in 4-imidazolone-5-propanoate binding.

The protein belongs to the metallo-dependent hydrolases superfamily. HutI family. Zn(2+) is required as a cofactor. Fe(3+) serves as cofactor.

Its subcellular location is the cytoplasm. The enzyme catalyses 4-imidazolone-5-propanoate + H2O = N-formimidoyl-L-glutamate. Its pathway is amino-acid degradation; L-histidine degradation into L-glutamate; N-formimidoyl-L-glutamate from L-histidine: step 3/3. Catalyzes the hydrolytic cleavage of the carbon-nitrogen bond in imidazolone-5-propanoate to yield N-formimidoyl-L-glutamate. It is the third step in the universal histidine degradation pathway. The sequence is that of Imidazolonepropionase from Klebsiella pneumoniae (strain 342).